Consider the following 354-residue polypeptide: Photosystem II protein D1 3 (354 aa).

3 consecutive transmembrane segments (helical) span residues 29 to 46 (YIGW…TATT), 118 to 133 (HFLI…EWEL), and 142 to 156 (WIAV…AATA). H118 serves as a coordination point for chlorophyll a. Y126 lines the pheophytin a pocket. Positions 170 and 189 each coordinate [CaMn4O5] cluster. A helical transmembrane segment spans residues 197-218 (FHQLGVAGVFGGALFSAMHGSL). Chlorophyll a is bound at residue H198. Residues H215 and 264 to 265 (SF) each bind a quinone. Fe cation is bound at residue H215. Residue H272 participates in Fe cation binding. The helical transmembrane segment at 274-288 (FLAAWPVIGIWFTAL) threads the bilayer. H332, E333, D342, and A344 together coordinate [CaMn4O5] cluster. Residues 345–354 (AVEVAPAVRG) constitute a propeptide that is removed on maturation.

The protein belongs to the reaction center PufL/M/PsbA/D family. As to quaternary structure, PSII is composed of 1 copy each of membrane proteins PsbA, PsbB, PsbC, PsbD, PsbE, PsbF, PsbH, PsbI, PsbJ, PsbK, PsbL, PsbM, PsbT, PsbX, PsbY, PsbZ, Psb30/Ycf12, peripheral proteins PsbO, CyanoQ (PsbQ), PsbU, PsbV and a large number of cofactors. It forms dimeric complexes. The cofactor is The D1/D2 heterodimer binds P680, chlorophylls that are the primary electron donor of PSII, and subsequent electron acceptors. It shares a non-heme iron and each subunit binds pheophytin, quinone, additional chlorophylls, carotenoids and lipids. D1 provides most of the ligands for the Mn4-Ca-O5 cluster of the oxygen-evolving complex (OEC). There is also a Cl(-1) ion associated with D1 and D2, which is required for oxygen evolution. The PSII complex binds additional chlorophylls, carotenoids and specific lipids.. Tyr-161 forms a radical intermediate that is referred to as redox-active TyrZ, YZ or Y-Z. In terms of processing, C-terminally processed by CtpA; processing is essential to allow assembly of the oxygen-evolving complex and thus photosynthetic growth.

The protein resides in the cellular thylakoid membrane. It catalyses the reaction 2 a plastoquinone + 4 hnu + 2 H2O = 2 a plastoquinol + O2. In terms of biological role, photosystem II (PSII) is a light-driven water:plastoquinone oxidoreductase that uses light energy to abstract electrons from H(2)O, generating O(2) and a proton gradient subsequently used for ATP formation. It consists of a core antenna complex that captures photons, and an electron transfer chain that converts photonic excitation into a charge separation. The D1/D2 (PsbA/PsbD) reaction center heterodimer binds P680, the primary electron donor of PSII as well as several subsequent electron acceptors. The protein is Photosystem II protein D1 3 of Synechococcus sp. (strain JA-3-3Ab) (Cyanobacteria bacterium Yellowstone A-Prime).